The following is a 140-amino-acid chain: UPF0102 protein Ppro_1186 (140 aa).

A disordered region spans residues Met1–Gly27. Residues Glu10–Ser25 are compositionally biased toward polar residues.

This sequence belongs to the UPF0102 family.

In Pelobacter propionicus (strain DSM 2379 / NBRC 103807 / OttBd1), this protein is UPF0102 protein Ppro_1186.